A 98-amino-acid polypeptide reads, in one-letter code: Large ribosomal subunit protein eL21 (98 aa).

It belongs to the eukaryotic ribosomal protein eL21 family.

This Methanocorpusculum labreanum (strain ATCC 43576 / DSM 4855 / Z) protein is Large ribosomal subunit protein eL21.